Reading from the N-terminus, the 322-residue chain is uncharacterized protein (322 aa).

This is an uncharacterized protein from Aquifex aeolicus (strain VF5).